Here is a 372-residue protein sequence, read N- to C-terminus: 4-hydroxy-3-methylbut-2-en-1-yl diphosphate synthase (flavodoxin) (372 aa).

Residues Cys270, Cys273, Cys305, and Glu312 each contribute to the [4Fe-4S] cluster site.

Belongs to the IspG family. The cofactor is [4Fe-4S] cluster.

It catalyses the reaction (2E)-4-hydroxy-3-methylbut-2-enyl diphosphate + oxidized [flavodoxin] + H2O + 2 H(+) = 2-C-methyl-D-erythritol 2,4-cyclic diphosphate + reduced [flavodoxin]. The protein operates within isoprenoid biosynthesis; isopentenyl diphosphate biosynthesis via DXP pathway; isopentenyl diphosphate from 1-deoxy-D-xylulose 5-phosphate: step 5/6. Its function is as follows. Converts 2C-methyl-D-erythritol 2,4-cyclodiphosphate (ME-2,4cPP) into 1-hydroxy-2-methyl-2-(E)-butenyl 4-diphosphate. This Cronobacter sakazakii (strain ATCC BAA-894) (Enterobacter sakazakii) protein is 4-hydroxy-3-methylbut-2-en-1-yl diphosphate synthase (flavodoxin).